A 391-amino-acid polypeptide reads, in one-letter code: 1-acyl-sn-glycerol-3-phosphate acyltransferase 2 (391 aa).

A helical membrane pass occupies residues 3–23 (MAAAAVIVPLGILFFISGLVV). The HXXXXD motif motif lies at 92-97 (HRSDID). 2 helical membrane-spanning segments follow: residues 306–326 (LAVV…FLHW) and 334–354 (KGIA…QILI). The segment at 358 to 391 (QSERSTPAKVAPAKPKDKHQSGSSSQTEVEEKQK) is disordered.

The protein belongs to the 1-acyl-sn-glycerol-3-phosphate acyltransferase family.

It is found in the endoplasmic reticulum membrane. It carries out the reaction a 1-acyl-sn-glycero-3-phosphate + an acyl-CoA = a 1,2-diacyl-sn-glycero-3-phosphate + CoA. Its pathway is phospholipid metabolism; CDP-diacylglycerol biosynthesis; CDP-diacylglycerol from sn-glycerol 3-phosphate: step 2/3. Converts lysophosphatidic acid (LPA) into phosphatidic acid by incorporating acyl moiety at the 2 position. This Brassica oleracea (Wild cabbage) protein is 1-acyl-sn-glycerol-3-phosphate acyltransferase 2 (LPAT2).